The sequence spans 181 residues: UPF0301 protein COXBURSA331_A2219 (181 aa).

It belongs to the UPF0301 (AlgH) family.

The polypeptide is UPF0301 protein COXBURSA331_A2219 (Coxiella burnetii (strain RSA 331 / Henzerling II)).